We begin with the raw amino-acid sequence, 338 residues long: 1-aminocyclopropane-1-carboxylate deaminase (338 aa).

Position 51 is an N6-(pyridoxal phosphate)lysine (lysine 51). Serine 78 serves as the catalytic Nucleophile.

The protein belongs to the ACC deaminase/D-cysteine desulfhydrase family. In terms of assembly, homotrimer. Pyridoxal 5'-phosphate is required as a cofactor.

The catalysed reaction is 1-aminocyclopropane-1-carboxylate + H2O = 2-oxobutanoate + NH4(+). Catalyzes a cyclopropane ring-opening reaction, the irreversible conversion of 1-aminocyclopropane-1-carboxylate (ACC) to ammonia and alpha-ketobutyrate. Allows growth on ACC as a nitrogen source. The chain is 1-aminocyclopropane-1-carboxylate deaminase from Ralstonia nicotianae (strain ATCC BAA-1114 / GMI1000) (Ralstonia solanacearum).